A 653-amino-acid chain; its full sequence is Fidgetin-like protein 2 (653 aa).

Disordered stretches follow at residues 1-36, 86-129, and 216-240; these read MHWT…ELPP, ASFL…SGAL, and YGAL…APTP. A compositionally biased stretch (polar residues) spans 10 to 27; sequence PLNQWPEQHLDVSSTTPS. A compositionally biased stretch (pro residues) spans 97-107; sequence EPWPGPEPPYP. The span at 119–129 shows a compositional bias: gly residues; it reads KSGGGGGSGAL. Residues 219 to 240 are compositionally biased toward pro residues; sequence LPPPPGPPPAPYLTPGLPAPTP. Residues alanine 395 and 435–440 each bind ATP; that span reads GAGKAL.

Belongs to the AAA ATPase family. The cofactor is Mg(2+).

The protein resides in the cytoplasm. It localises to the cell cortex. It catalyses the reaction ATP + H2O = ADP + phosphate + H(+). In terms of biological role, microtubule-severing enzyme that negatively regulates cell migration and wound healing. In migrating cells, targets dynamic microtubules (MTs) at the leading edge and severs them, thereby suppressing motility. Microtubule severing releases ARHGEF2 which activates RHOA, which in turn regulates focal ahesion turnover via focal adhesion kinase, as opposed to F-actin polymerization, to suppress cell motility. Negative regulator of axon regeneration that suppresses axonal growth by selectively severing dynamic MTs in the distal axon shaft and growth cone. Contributes to proper cell branching during endothelial and neuronal development. The sequence is that of Fidgetin-like protein 2 from Homo sapiens (Human).